Consider the following 121-residue polypeptide: Heme-degrading monooxygenase (121 aa).

One can recognise an ABM domain in the interval 2-101; sequence IIVTNTIKVE…EQREDRKGIV (100 aa). Asn-6 is a Fe cation binding site. The disordered stretch occupies residues 76 to 98; it reads KSDSFKKAHGRTKDTREQREDRK. A compositionally biased stretch (basic and acidic residues) spans 78–98; it reads DSFKKAHGRTKDTREQREDRK. Residue His-84 participates in heme binding.

This sequence belongs to the antibiotic biosynthesis monooxygenase family. Heme-degrading monooxygenase IsdG subfamily. Homodimer.

It is found in the cytoplasm. It catalyses the reaction heme b + 3 reduced [NADPH--hemoprotein reductase] + 3 O2 = biliverdin IXalpha + CO + Fe(2+) + 3 oxidized [NADPH--hemoprotein reductase] + 3 H2O + H(+). Its function is as follows. Allows bacterial pathogens to use the host heme as an iron source. Catalyzes the oxidative degradation of the heme macrocyclic porphyrin ring to the biliverdin in the presence of a suitable electron donor such as ascorbate or NADPH--cytochrome P450 reductase, with subsequent release of free iron. This is Heme-degrading monooxygenase from Listeria welshimeri serovar 6b (strain ATCC 35897 / DSM 20650 / CCUG 15529 / CIP 8149 / NCTC 11857 / SLCC 5334 / V8).